Consider the following 129-residue polypeptide: Small ribosomal subunit protein uS11 (129 aa).

It belongs to the universal ribosomal protein uS11 family. Part of the 30S ribosomal subunit. Interacts with proteins S7 and S18. Binds to IF-3.

Functionally, located on the platform of the 30S subunit, it bridges several disparate RNA helices of the 16S rRNA. Forms part of the Shine-Dalgarno cleft in the 70S ribosome. The polypeptide is Small ribosomal subunit protein uS11 (Anoxybacillus flavithermus (strain DSM 21510 / WK1)).